The chain runs to 372 residues: Glutamate 5-kinase (372 aa).

Lys14 provides a ligand contact to ATP. The substrate site is built by Ser54, Asp141, and Asn153. ATP is bound at residue 173–174 (TD). The PUA domain occupies 280-358 (RGHVVIDDGA…GEIESVLGYM (79 aa)).

This sequence belongs to the glutamate 5-kinase family.

The protein localises to the cytoplasm. The catalysed reaction is L-glutamate + ATP = L-glutamyl 5-phosphate + ADP. Its pathway is amino-acid biosynthesis; L-proline biosynthesis; L-glutamate 5-semialdehyde from L-glutamate: step 1/2. Catalyzes the transfer of a phosphate group to glutamate to form L-glutamate 5-phosphate. This Paraburkholderia phymatum (strain DSM 17167 / CIP 108236 / LMG 21445 / STM815) (Burkholderia phymatum) protein is Glutamate 5-kinase.